The primary structure comprises 210 residues: Na(+)-translocating NADH-quinone reductase subunit D (210 aa).

6 helical membrane-spanning segments follow: residues 11–31 (ILAPVLDNNPIALQVLGVCSA), 42–62 (FVMTLAVMFVTAFSNLFVSLI), 70–90 (VRIIVQMAIIASLVIVVDQIL), 103–123 (VFVGLIITNCIVMGRAEAFAM), 131–151 (FIDGIGNGLGYGFVLITVGFF), and 178–198 (NGLMLLAPSAFFLIGFMIWAI).

This sequence belongs to the NqrDE/RnfAE family. Composed of six subunits; NqrA, NqrB, NqrC, NqrD, NqrE and NqrF.

The protein resides in the cell inner membrane. It catalyses the reaction a ubiquinone + n Na(+)(in) + NADH + H(+) = a ubiquinol + n Na(+)(out) + NAD(+). In terms of biological role, NQR complex catalyzes the reduction of ubiquinone-1 to ubiquinol by two successive reactions, coupled with the transport of Na(+) ions from the cytoplasm to the periplasm. NqrA to NqrE are probably involved in the second step, the conversion of ubisemiquinone to ubiquinol. The chain is Na(+)-translocating NADH-quinone reductase subunit D from Vibrio anguillarum (Listonella anguillarum).